Consider the following 99-residue polypeptide: Nucleoid-associated protein EbfC (99 aa).

It belongs to the YbaB/EbfC family. Homodimer.

The protein localises to the cytoplasm. Its subcellular location is the nucleoid. In terms of biological role, binds to DNA and alters its conformation. May be involved in regulation of gene expression, nucleoid organization and DNA protection. In Borrelia hermsii (strain HS1 / DAH), this protein is Nucleoid-associated protein EbfC.